An 866-amino-acid polypeptide reads, in one-letter code: E3 ubiquitin-protein ligase RNF216 (866 aa).

Disordered regions lie at residues 46–117, 131–161, and 211–240; these read LVTP…NPRS, YTES…SAAL, and EFPG…HPLG. The segment covering 55–76 has biased composition (acidic residues); that stretch reads EEEDLDDDVILTEDDSEDDYGE. Glycyl lysine isopeptide (Lys-Gly) (interchain with G-Cter in SUMO2) cross-links involve residues L80, T89, and K100. Positions 137–156 are enriched in polar residues; sequence LETQNQSSEDSETELLSNLG. Glycyl lysine isopeptide (Lys-Gly) (interchain with G-Cter in SUMO2) cross-links involve residues K351 and K354. S419 is modified (phosphoserine). Glycyl lysine isopeptide (Lys-Gly) (interchain with G-Cter in SUMO2) cross-links involve residues K425, K430, K448, K459, and K485. Residues 475–491 adopt a coiled-coil conformation; the sequence is VQQEQEFYEQKIKEMAE. Residues 511-728 are TRIAD supradomain; that stretch reads QLIECRCCYG…SPGAPCQECS (218 aa). C515, C518, C537, C540, C605, and C608 together coordinate Zn(2+). An RING-type 1 zinc finger spans residues 515–564; that stretch reads CRCCYGEFPFEELTQCADAHLFCKECLIRYAQEAVFGSGKLELSCMEGSC. The IBR-type zinc finger occupies 583–648; the sequence is YKYYERKAEE…LWKEHNGLTC (66 aa). K619 participates in a covalent cross-link: Glycyl lysine isopeptide (Lys-Gly) (interchain with G-Cter in SUMO2). Positions 623, 628, 633, 636, 643, and 648 each coordinate Zn(2+). Residues K658 and K666 each participate in a glycyl lysine isopeptide (Lys-Gly) (interchain with G-Cter in SUMO2) cross-link. Zn(2+) contacts are provided by C675 and C678. Residues 675-703 form an RING-type 2; atypical zinc finger; that stretch reads CHKCGTGLIKSEGCNRMSCRCGAQMCYLC. The active site involves C688. Positions 693, 695, 700, 703, and 716 each coordinate Zn(2+). S719 carries the post-translational modification Phosphoserine; by MAPK1. C724 is a Zn(2+) binding site. The stretch at 737–763 forms a coiled coil; it reads TEDDEKLIEEIQKEAEEEQKRKNGENT. Residues K765 and K773 each participate in a glycyl lysine isopeptide (Lys-Gly) (interchain with G-Cter in SUMO2) cross-link.

In terms of assembly, interacts with UBE2L3 and to some extent with UBE2L6. Interacts with TRAF3, TLR3, TLR4, TLR5 and TLR9. Isoform 3/ZIN binds RIPK1. As to quaternary structure, (Microbial infection) Isoform 3/ZIN binds RIPK1 and HIV Vif. Auto-ubiquitinated. In terms of processing, phosphorylation at Ser-719 enhances acceptor ubiquitin binding and chain-type specificity towards 'Lys-63' di-ubiquitin but not di-ubiquitin with other linkage types. As to expression, ubiquitous, with the highest levels of expression in testis and peripheral blood leukocytes.

It localises to the cytoplasm. Its subcellular location is the cytoplasmic vesicle. The protein resides in the clathrin-coated vesicle. It carries out the reaction S-ubiquitinyl-[E2 ubiquitin-conjugating enzyme]-L-cysteine + [acceptor protein]-L-lysine = [E2 ubiquitin-conjugating enzyme]-L-cysteine + N(6)-ubiquitinyl-[acceptor protein]-L-lysine.. Its pathway is protein modification; protein ubiquitination. Its activity is regulated as follows. Allosterically activated by 'Lys-63'-linked di-ubiquitin. Functionally, E3 ubiquitin ligase which accepts ubiquitin from specific E2 ubiquitin-conjugating enzymes, and then transfers it to substrates promoting their ubiquitination. Plays a role in the regulation of antiviral responses by promoting the degradation of TRAF3, TLR4 and TLR9. In turn, down-regulates NF-kappa-B and IRF3 activation as well as beta interferon production. Also participates in the regulation of autophagy by ubiquitinating BECN1 leading to its degradation and autophagy inhibition. Plays a role in ARC-dependent synaptic plasticity by mediating ARC ubiquitination resulting in its rapid proteasomal degradation. Plays aso an essential role in spermatogenesis and male fertility. Mechanistically, regulates meiosis by promoting the degradation of PRKACB through the ubiquitin-mediated lysosome pathway. Modulates the gonadotropin-releasing hormone signal pathway by affecting the stability of STAU2 that is required for the microtubule-dependent transport of neuronal RNA from the cell body to the dendrite. In terms of biological role, inhibits TNF and IL-1 mediated activation of NF-kappa-B. Promotes TNF and RIP mediated apoptosis. This chain is E3 ubiquitin-protein ligase RNF216 (RNF216), found in Homo sapiens (Human).